Consider the following 382-residue polypeptide: Cytochrome c biogenesis CcmF N-terminal-like mitochondrial protein 1 (382 aa).

4 consecutive transmembrane segments (helical) span residues Met-1 to Phe-21, Ala-30 to Cys-50, His-79 to Tyr-99, and Ser-117 to Tyr-137.

It belongs to the CcmF/CycK/Ccl1/NrfE/CcsA family. In terms of assembly, interacts with CCMFN2 and CCMH.

The protein localises to the mitochondrion inner membrane. Forms a complex with CCMFC, CCMFN2 and CCMH that performs the assembly of heme with c-type apocytochromes in mitochondria. The chain is Cytochrome c biogenesis CcmF N-terminal-like mitochondrial protein 1 from Arabidopsis thaliana (Mouse-ear cress).